The chain runs to 1892 residues: Kinesin-like protein KIN-12E (1892 aa).

The interval 1-28 (MAGHGAGGRRASTSRAAARRVEAETNEN) is disordered. The Kinesin motor domain maps to 64–401 (NVQVLIRIRP…LKFAQRAKLI (338 aa)). Position 145–152 (145–152 (GQTGSGKT)) interacts with ATP. 5 coiled-coil regions span residues 406 to 438 (KVNE…QQNM), 486 to 526 (SLRR…TTVK), 1066 to 1139 (LFSN…LHEQ), 1303 to 1357 (KLLQ…LAEN), and 1396 to 1528 (ISET…SYQI). The segment covering 1633-1649 (LHESNSDTGHTKFEKPS) has biased composition (basic and acidic residues). The disordered stretch occupies residues 1633–1656 (LHESNSDTGHTKFEKPSGRTRGSG). The stretch at 1780-1841 (MDQRKADLLE…LVGSNQAIAE (62 aa)) forms a coiled coil. The disordered stretch occupies residues 1870–1892 (HARHEHSRLQAAKSSRTRRGSHQ).

It belongs to the TRAFAC class myosin-kinesin ATPase superfamily. Kinesin family. KIN-12 subfamily.

The polypeptide is Kinesin-like protein KIN-12E (Oryza sativa subsp. japonica (Rice)).